Consider the following 458-residue polypeptide: UDP-N-acetylglucosamine 1-carboxyvinyltransferase (458 aa).

22 to 23 (KN) provides a ligand contact to phosphoenolpyruvate. Arginine 94 is a binding site for UDP-N-acetyl-alpha-D-glucosamine. Aspartate 119 (proton donor) is an active-site residue. Aspartate 309 and valine 331 together coordinate UDP-N-acetyl-alpha-D-glucosamine.

The protein belongs to the EPSP synthase family. MurA subfamily.

The protein resides in the cytoplasm. The catalysed reaction is phosphoenolpyruvate + UDP-N-acetyl-alpha-D-glucosamine = UDP-N-acetyl-3-O-(1-carboxyvinyl)-alpha-D-glucosamine + phosphate. Its pathway is cell wall biogenesis; peptidoglycan biosynthesis. Cell wall formation. Adds enolpyruvyl to UDP-N-acetylglucosamine. This chain is UDP-N-acetylglucosamine 1-carboxyvinyltransferase, found in Chlamydia pneumoniae (Chlamydophila pneumoniae).